Consider the following 148-residue polypeptide: MQLTVKALKGKEANIQVSEGDTVLAVKRLVEEKLKVPVSQQRLLFRGKALADEHCLAHYSIGPGSRLNLMVKEQVAPEGHSGGNTAWKSLSVILRKHFSPTDAERVLEYVQKDYERSLSLLSLDDIERLATRILHPQYSEATDLGFLD.

Residues 1 to 76 (MQLTVKALKG…LNLMVKEQVA (76 aa)) form the Ubiquitin-like domain.

As to quaternary structure, component of the bag6/bat3 complex.

The protein resides in the cytoplasm. Its subcellular location is the cytosol. The protein localises to the nucleus. As part of a cytosolic protein quality control complex, the bag6/bat3 complex, maintains misfolded and hydrophobic patches-containing proteins in a soluble state and participates in their proper delivery to the endoplasmic reticulum or alternatively can promote their sorting to the proteasome where they undergo degradation. The bag6/bat3 complex is involved in the post-translational delivery of tail-anchored/type II transmembrane proteins to the endoplasmic reticulum membrane. Similarly, the bag6/bat3 complex also functions as a sorting platform for proteins of the secretory pathway that are mislocalized to the cytosol either delivering them to the proteasome for degradation or to the endoplasmic reticulum. The bag6/bat3 complex also plays a role in the endoplasmic reticulum-associated degradation (ERAD), a quality control mechanism that eliminates unwanted proteins of the endoplasmic reticulum through their retrotranslocation to the cytosol and their targeting to the proteasome. It maintains these retrotranslocated proteins in an unfolded yet soluble state condition in the cytosol to ensure their proper delivery to the proteasome. The chain is Ubiquitin-like protein 4A (ubl4a) from Xenopus tropicalis (Western clawed frog).